An 83-amino-acid polypeptide reads, in one-letter code: Small ribosomal subunit protein bS18 (83 aa).

Belongs to the bacterial ribosomal protein bS18 family. In terms of assembly, part of the 30S ribosomal subunit. Forms a tight heterodimer with protein bS6.

Functionally, binds as a heterodimer with protein bS6 to the central domain of the 16S rRNA, where it helps stabilize the platform of the 30S subunit. This is Small ribosomal subunit protein bS18 from Methylobacterium sp. (strain 4-46).